The sequence spans 181 residues: MAQDTNNLIWLDMEMTGLNPDQDRIIEVAMIVTDSNLNVLAESPVLVIHQPDAILDGMDDWNKNTHGKSGLIEKVKNSTVSEAEAEQLLLEFMMQHVPERATPMCGNTIHQDRRFMARWMPKLEAYFHYRNLDVSTLKELCKRWRPEIAKGVVKRGKHEALADILESIEEMRYYREHFLKV.

Residues 8–171 (LIWLDMEMTG…ADILESIEEM (164 aa)) enclose the Exonuclease domain. Residue tyrosine 129 is part of the active site.

Belongs to the oligoribonuclease family.

The protein resides in the cytoplasm. 3'-to-5' exoribonuclease specific for small oligoribonucleotides. The protein is Oligoribonuclease of Chromobacterium violaceum (strain ATCC 12472 / DSM 30191 / JCM 1249 / CCUG 213 / NBRC 12614 / NCIMB 9131 / NCTC 9757 / MK).